The primary structure comprises 148 residues: Snaclec stejaggregin-A subunit beta-2 (148 aa).

The first 23 residues, 1–23 (MGQFIFVSFGLLVVLLSLSGAGA), serve as a signal peptide directing secretion. A disulfide bridge connects residues Cys27 and Cys38. The C-type lectin domain maps to 34–145 (YDLYCYKVFK…CSRTHYVVCK (112 aa)). N-linked (GlcNAc...) asparagine glycans are attached at residues Asn47 and Asn78. 2 disulfide bridges follow: Cys55–Cys144 and Cys121–Cys136.

The protein belongs to the snaclec family. Heteromultimer; disulfide-linked. In terms of tissue distribution, expressed by the venom gland.

The protein localises to the secreted. Functionally, interferes with one step of hemostasis (modulation of platelet aggregation, or coagulation cascade, for example). This chain is Snaclec stejaggregin-A subunit beta-2, found in Trimeresurus stejnegeri (Chinese green tree viper).